We begin with the raw amino-acid sequence, 7158 residues long: Twitchin (7158 aa).

2 Ig-like domains span residues 5–97 (PRFT…INLN) and 111–204 (PSFV…LALN). Disulfide bonds link C25–C81 and C132–C188. Disordered stretches follow at residues 204–381 (NFEE…PIVL), 473–639 (EEEL…TKLR), 658–732 (KKVK…DSMA), and 763–955 (EVKE…IDMR). The segment covering 220-238 (TASPRPSSRGPGSRPSSPK) has biased composition (low complexity). Basic and acidic residues-rich tracts occupy residues 242-259 (KSRE…EGSP) and 279-291 (ESRR…KMEV). Composition is skewed to low complexity over residues 319 to 340 (SPST…RKGS) and 347 to 368 (SGTT…ASSD). The Ig-like 3 domain maps to 377-466 (PPIVLEASRS…GEGQSSAMVK (90 aa)). The span at 504–513 (RVARRSKSKS) shows a compositional bias: basic residues. The span at 514 to 523 (KSPAPQAKKS) shows a compositional bias: low complexity. 2 stretches are compositionally biased toward basic and acidic residues: residues 529-540 (GRQEASEVEHKR) and 601-618 (KTDS…DTLL). Low complexity predominate over residues 620 to 630 (KTTTSTKNESS). A Kelch 1 repeat occupies 718–764 (VKSGAGGLEKSDSMASLKKLDLKKGKIDDNSDGAFKVQLKKVVKKEV). Basic and acidic residues-rich tracts occupy residues 763–813 (EVKE…DKPK), 837–850 (KEVE…ELKA), 885–897 (KAHD…EGIK), and 917–955 (SESR…IDMR). The Ig-like 4 domain occupies 980 to 1072 (PKIVEVPENV…DSADVKLLVT (93 aa)). Positions 1088–1118 (SQAGFQKDGEGGGAGGGGGEKKPMTEAERRQ) are disordered. Positions 1106–1118 (GEKKPMTEAERRQ) are enriched in basic and acidic residues. Ig-like domains are found at residues 1122–1213 (PGKK…AQLT), 1217–1306 (PPMK…SKVQ), and 1312–1398 (PRHT…AQLI). C1150 and C1201 are joined by a disulfide. 8 consecutive Fibronectin type-III domains span residues 1598 to 1690 (PKGP…AKNP), 1696 to 1791 (KPKN…MKAK), 1891 to 1988 (PPKG…IKDP), 1994 to 2087 (KPGR…AKPK), 2189 to 2282 (PNGP…AKNP), 2288 to 2383 (KTGT…AKPR), 2483 to 2576 (PLGP…AKNP), and 2579 to 2675 (VPGK…AKPR). The Kelch 2 repeat unit spans residues 2014 to 2058 (PPHKDGGAPIEEYIVEVRDPDTKEWKEVKRVPDTNASISGLKEGK). The Ig-like 8 domain occupies 2086 to 2181 (PKFIPAWLKH…GADEEKANLT (96 aa)). The Kelch 3 repeat unit spans residues 2207–2253 (WKPPDDDGGEPIEYYEVEKLDTATGRWVPCAKVKDTKAHIDGLKKGQ). A compositionally biased stretch (basic and acidic residues) spans 2266 to 2287 (GASDALSTDKDTKAKNPYDEPG). The tract at residues 2266-2295 (GASDALSTDKDTKAKNPYDEPGKTGTPDVV) is disordered. The stretch at 2502-2547 (KVPEDDGGAPIDHYEIEKMDLATGRWVPCGRSETTKTTVPNLQPGH) is one Kelch 4 repeat. Residues 2679 to 2763 (PRIHREDLSD…TNINGTDSVT (85 aa)) enclose the Ig-like 9 domain. 2 consecutive Fibronectin type-III domains span residues 2775 to 2868 (PKGP…AKNP) and 2874 to 2968 (RPGR…AKPR). The Kelch 5 repeat unit spans residues 2793–2839 (WKPPEDDGGEPIEFYEIEKMNTKDGIWVPCGRSGDTHFTVDSLNKGD). The segment at 2849–2901 (NSEGPSDPLETETDILAKNPFDRPDRPGRPEPTDWDSDHVDLKWDPPLSDGGA) is disordered. Over residues 2868 to 2892 (PFDRPDRPGRPEPTDWDSDHVDLKW) the composition is skewed to basic and acidic residues. The Ig-like 10 domain occupies 2972–3062 (PHIDRDALKN…GEDEATVKIN (91 aa)). 2 consecutive Fibronectin type-III domains span residues 3070–3165 (PNGP…AKDP) and 3171–3265 (KTNA…AKAR). The stretch at 3089–3134 (RAPDDDGGIPIENYVIEKYDTASGRWVPAAKVAGDKTTAVVDGLIP) is one Kelch 6 repeat. The Ig-like 11 domain maps to 3268 to 3358 (PPVIDRNSIQ…GTDTAEVKVT (91 aa)). Fibronectin type-III domains are found at residues 3365–3459 (SPRG…AKDP) and 3465–3559 (KPGT…AKPR). The stretch at 3384 to 3430 (WKEPEDDGGAEISHYVIEKQDAATGRWTACGESKDTNFHVDDLTQGH) is one Kelch 7 repeat. Residues 3563 to 3653 (PKINRDMFVA…GKDEHEVDVN (91 aa)) enclose the Ig-like 12 domain. 6 Fibronectin type-III domains span residues 3661 to 3753 (PEGP…AKNP), 3759 to 3853 (APTD…AKPR), 3954 to 4047 (PEGP…AKNQ), 4053 to 4146 (PVDK…TKAR), 4246 to 4340 (PEGP…AKDP), and 4346 to 4440 (KPGR…TAKP). The Kelch 8 repeat unit spans residues 3972 to 4018 (WKPPTDNGGTDVLHYIVEKMDTSRGTWQEVGTFPDCTAKVNKLVPGK). Kelch repeat units follow at residues 4265–4310 (KPPK…LTEG) and 4365–4410 (DPPR…RVQK). Positions 4445 to 4531 (PKFDLDLDGK…GEAEANIKIT (87 aa)) constitute an Ig-like 13 domain. Fibronectin type-III domains lie at 4538–4631 (APEN…IKDP), 4637–4733 (APST…CRPY), 4739–4834 (APDA…IEEQ), 4936–5028 (PTGP…AKNP), 5034–5129 (APGQ…ADNA), 5231–5326 (SPQH…VAKY), 5333–5427 (QPEA…LKSR), and 5430–5528 (PPGP…IQES). One copy of the Kelch 11 repeat lies at 4557 to 4602 (DAPKDDGGAEIAGYKIEYQEVGSQIWDKVPGLISGTAYTVRGLEHG). The Kelch 12 repeat unit spans residues 5287–5335 (LNYTVGGLIKDNRYRFRVRAETQYGVSEPCELADVVVAKYQFEVPNQPE). Residues 5533–5621 (PQIVVKPEDT…GSDTATANLV (89 aa)) enclose the Ig-like 14 domain. 2 consecutive Fibronectin type-III domains span residues 5723–5817 (PQGP…ARLP) and 5823–5919 (SPLN…ASGS). The Kelch 13 repeat unit spans residues 5742-5787 (RPPVTDGGSKITSYVVEKRDLSKDEWVTVTSNVKDMNYIVTGLFEN). 2 consecutive Ig-like domains span residues 5923 to 6011 (PKIV…ANLR) and 6016 to 6107 (PRVF…VNVT). A disulfide bridge links C5944 with C5995. In terms of domain architecture, Fibronectin type-III 31 spans 6114 to 6207 (PPRFPIIENI…PTAPVLIPGD (94 aa)). Residues 6261–6516 (YDIHEELGTG…IHQALEHPWL (256 aa)) form the Protein kinase domain. ATP is bound by residues 6267 to 6275 (LGTGAFGVV) and K6290. The active-site Proton acceptor is the D6382. A C-terminal regulatory domain (CDR) region spans residues 6517-6581 (TPGNAPGRDS…SIRDAFWDRS (65 aa)). Ig-like domains are found at residues 6585-6673 (PRFI…VFLN), 6696-6795 (PRVE…CVLT), 6863-6952 (PSFT…ATLT), 6958-7059 (PLLN…ASLV), and 7067-7149 (PPVT…KAIA).

This sequence belongs to the protein kinase superfamily. CAMK Ser/Thr protein kinase family. May interact (via protein kinase and CRD domains) with mak-1 (via protein kinase domain). It depends on Mg(2+) as a cofactor. In terms of processing, phosphorylated by mak-1 on the protein kinase domain and/or CDR domain in vitro. Expressed in body wall, anal, vulval, and pharyngeal muscles (at protein level).

Its subcellular location is the cytoplasm. The protein resides in the myofibril. It is found in the sarcomere. It localises to the a band. The catalysed reaction is L-seryl-[protein] + ATP = O-phospho-L-seryl-[protein] + ADP + H(+). It catalyses the reaction L-threonyl-[protein] + ATP = O-phospho-L-threonyl-[protein] + ADP + H(+). With respect to regulation, forces generated by the contraction/relaxation cycles of muscle activity separate the regulatory domain from the catalytic core, activating the enzyme. At rest, the kinase domain is in a closed conformation. The active site is occupied by the autoinhibitory region (CDR), which makes extensive contact with the catalytic site, blocking substrate binding. At low forces the regulatory tail will unravel reversibly and expose the active site to its substrates, potentially stabilized by binding of Ca/CALM. At high forces the kinase begins to unfold and the integrity of the active site is disrupted. Functionally, regulator of muscle contraction and relaxation. Senses mechanical strain that occurs during muscle activity by unfolding in clearly resolvable steps at differing forces. Plays a role in the organization of sarcomeres in body wall muscles. This is Twitchin from Caenorhabditis elegans.